We begin with the raw amino-acid sequence, 195 residues long: Large ribosomal subunit protein uL5 (195 aa).

Residues 1 to 25 (MARVPPPALKKDKKEKKPPKDNSKN) form a disordered region.

Belongs to the universal ribosomal protein uL5 family. In terms of assembly, component of the large ribosomal subunit.

Its subcellular location is the nucleus. It is found in the cytoplasm. Its function is as follows. Component of the ribosome, a large ribonucleoprotein complex responsible for the synthesis of proteins in the cell. The small ribosomal subunit (SSU) binds messenger RNAs (mRNAs) and translates the encoded message by selecting cognate aminoacyl-transfer RNA (tRNA) molecules. The large subunit (LSU) contains the ribosomal catalytic site termed the peptidyl transferase center (PTC), which catalyzes the formation of peptide bonds, thereby polymerizing the amino acids delivered by tRNAs into a polypeptide chain. The nascent polypeptides leave the ribosome through a tunnel in the LSU and interact with protein factors that function in enzymatic processing, targeting, and the membrane insertion of nascent chains at the exit of the ribosomal tunnel. This Spodoptera frugiperda (Fall armyworm) protein is Large ribosomal subunit protein uL5 (RpL11).